A 166-amino-acid polypeptide reads, in one-letter code: Interferon gamma (166 aa).

The N-terminal stretch at 1-23 is a signal peptide; sequence MNYTSYILAFQLCVILCSSGYYC. Gln-24 is modified (pyrrolidone carboxylic acid). N-linked (GlcNAc...) asparagine glycosylation is found at Asn-39 and Asn-106.

The protein belongs to the type II (or gamma) interferon family. As to quaternary structure, homodimer. Interacts with IFNGR1 (via extracellular domain); this interaction promotes IFNGR1 dimerization. In terms of tissue distribution, released primarily from activated T lymphocytes.

It is found in the secreted. Type II interferon produced by immune cells such as T-cells and NK cells that plays crucial roles in antimicrobial, antiviral, and antitumor responses by activating effector immune cells and enhancing antigen presentation. Primarily signals through the JAK-STAT pathway after interaction with its receptor IFNGR1 to affect gene regulation. Upon IFNG binding, IFNGR1 intracellular domain opens out to allow association of downstream signaling components JAK2, JAK1 and STAT1, leading to STAT1 activation, nuclear translocation and transcription of IFNG-regulated genes. Many of the induced genes are transcription factors such as IRF1 that are able to further drive regulation of a next wave of transcription. Plays a role in class I antigen presentation pathway by inducing a replacement of catalytic proteasome subunits with immunoproteasome subunits. In turn, increases the quantity, quality, and repertoire of peptides for class I MHC loading. Increases the efficiency of peptide generation also by inducing the expression of activator PA28 that associates with the proteasome and alters its proteolytic cleavage preference. Up-regulates as well MHC II complexes on the cell surface by promoting expression of several key molecules such as cathepsins B/CTSB, H/CTSH, and L/CTSL. Participates in the regulation of hematopoietic stem cells during development and under homeostatic conditions by affecting their development, quiescence, and differentiation. The chain is Interferon gamma (IFNG) from Ailuropoda melanoleuca (Giant panda).